The chain runs to 518 residues: MAKFVIAGRADCPYYAKTELVADYLQKNLPDFRIHKITQRPEVWEDWLKDVCEKNKWSHKNSPIIWRELLDRGGKGLLLGGYNEFLEHAQLYYDVTSSMTTELMMVIAQENLGAHIEKEQEEEALKTCINPLQVWITSASAPACYNLIPILTSGEVFGMHTEISITLFDNKQAEEHLKSLVVETQDLASPVLRSVSICTKVEEAFRQAHVIVVLDDSTNKEVFTLEDCLRSRVPLCRLYGYLIEKNAHESVRVIVGGRTFVNLKTVLLMRYAPRIAHNIIAVALGVEGEAKAILARKLKTAPSYIKDVIIWGNISGNNYVDLRKTRVYRYESAIWGPLHYSRPVLNLIFDSEWVKREFVAILKNLTTTGRQFGGILAAHSIATTLKYWYHGSPPGEIVSLGILSEGQFGIPKGIVFSMPVKFENGTWVVLTDLKDVEISEQIMTRMTSDLIQEKLVALGDKIHFQPYQSGHKDLVPDEEKNLAMSDAAEFPNQIPQTTFEKPQSLEFLNEFEGKTVES.

It belongs to the LDH/MDH superfamily. MDH type 2 family.

The sequence is that of Putative malate dehydrogenase 1B (MDH1B) from Homo sapiens (Human).